The primary structure comprises 286 residues: ATP synthase gamma chain (286 aa).

This sequence belongs to the ATPase gamma chain family. As to quaternary structure, F-type ATPases have 2 components, CF(1) - the catalytic core - and CF(0) - the membrane proton channel. CF(1) has five subunits: alpha(3), beta(3), gamma(1), delta(1), epsilon(1). CF(0) has three main subunits: a, b and c.

Its subcellular location is the cell inner membrane. Functionally, produces ATP from ADP in the presence of a proton gradient across the membrane. The gamma chain is believed to be important in regulating ATPase activity and the flow of protons through the CF(0) complex. This chain is ATP synthase gamma chain, found in Shewanella frigidimarina (strain NCIMB 400).